The following is a 479-amino-acid chain: MRAMPLSIGTIHFVGIAGIGMSGIAEVLHNLGYSVQGSDLSENANVARLRAAGIPVAIGHDAANLGNAQVVVVSTAVPRDNPEVQAARKRMIPVVRRAEMLGELMRLRWSVAIGGTHGKTTTTSLVAAVLEGAGLDPTVINGGIINAYGTNARLGGGDWMVVEADESDGSFLRLPAVIAVVTNMDPEHLDHWGSAEAMEAGYRQFVSNIPFYGFAVLCIDHPGVQRMIPDLSDHRLITYGLSPQADVRAERIMSDRNGATFEVRLSERVAGRERVLAPMRLPMLGNHNVQNALAAIAIGIEMEVPEVDLRAALASFRGVKRRFTKTGEVAGITVIDDYGHHPVEIAAVLRAARQAGARDVIAVVQPHRYTRLATLFEDFCTCMNDAGKVIVADVYPAGEEPIPGIDRDALVEGLRARGHKSVVSLGSPDHLAEMINAMARAGDYVVCLGAGSITNWAQALPNQLQALIETTRRGAGGMR.

115 to 121 (GTHGKTT) contacts ATP.

It belongs to the MurCDEF family.

The protein localises to the cytoplasm. The enzyme catalyses UDP-N-acetyl-alpha-D-muramate + L-alanine + ATP = UDP-N-acetyl-alpha-D-muramoyl-L-alanine + ADP + phosphate + H(+). Its pathway is cell wall biogenesis; peptidoglycan biosynthesis. Cell wall formation. In Acidiphilium cryptum (strain JF-5), this protein is UDP-N-acetylmuramate--L-alanine ligase.